A 141-amino-acid chain; its full sequence is Regulator of ribonuclease activity B (141 aa).

The tract at residues 112–141 (GTYFEDPNAPDDEDDNDDLFPPEEDEPRLH) is disordered. Over residues 119-141 (NAPDDEDDNDDLFPPEEDEPRLH) the composition is skewed to acidic residues.

The protein belongs to the RraB family. In terms of assembly, interacts with the C-terminal region of Rne.

The protein localises to the cytoplasm. Functionally, globally modulates RNA abundance by binding to RNase E (Rne) and regulating its endonucleolytic activity. Can modulate Rne action in a substrate-dependent manner by altering the composition of the degradosome. The sequence is that of Regulator of ribonuclease activity B from Xenorhabdus nematophila (strain ATCC 19061 / DSM 3370 / CCUG 14189 / LMG 1036 / NCIMB 9965 / AN6).